We begin with the raw amino-acid sequence, 644 residues long: 3D-(3,5/4)-trihydroxycyclohexane-1,2-dione hydrolase (644 aa).

A thiamine diphosphate-binding site is contributed by glutamate 65. Residues 442–522 (SLPGDLQRMW…INVLLFDNSG (81 aa)) form a thiamine pyrophosphate binding region. Residues aspartate 493 and asparagine 520 each coordinate Mg(2+).

The protein belongs to the TPP enzyme family. Mg(2+) serves as cofactor. The cofactor is thiamine diphosphate.

The catalysed reaction is 3D-3,5/4-trihydroxycyclohexane-1,2-dione + H2O = 5-deoxy-D-glucuronate + H(+). It functions in the pathway polyol metabolism; myo-inositol degradation into acetyl-CoA; acetyl-CoA from myo-inositol: step 3/7. In terms of biological role, involved in the cleavage of the C1-C2 bond of 3D-(3,5/4)-trihydroxycyclohexane-1,2-dione (THcHDO) to yield 5-deoxy-glucuronate (5DG). The polypeptide is 3D-(3,5/4)-trihydroxycyclohexane-1,2-dione hydrolase (Bacillus anthracis (strain A0248)).